Reading from the N-terminus, the 538-residue chain is Pentatricopeptide repeat-containing protein At1g33350 (538 aa).

10 PPR repeats span residues 87 to 123 (NTHL…SVPR), 125 to 159 (NHFI…GFHL), 160 to 191 (YVVV…MSER), 192 to 226 (NVVS…DVPS), 227 to 253 (WNAI…MINE), 259 to 293 (NEVT…DLSS), 294 to 324 (DVFV…ASKK), 325 to 359 (SLTA…NIND), 363 to 398 (DHIT…GIEP), and 399 to 433 (RIEH…ADEA). The type E motif stretch occupies residues 434 to 509 (IWGSLLNACK…PPGWSRIEID (76 aa)).

The protein belongs to the PPR family. PCMP-E subfamily.

This chain is Pentatricopeptide repeat-containing protein At1g33350 (PCMP-E57), found in Arabidopsis thaliana (Mouse-ear cress).